The following is a 1402-amino-acid chain: MAMNQEIMNLFNPTTPAQVFDQIRISIASPEKILSWSYGEIKKPETINYRTFKPERDGLFCARIFGPIKDYECLCGKYKRMKYKGIICEKCSVEVTLSRVRRERMGHIELAAPVAHIWFLKSLPSRIGQLLDMTLKDLERILYFEYYVVLEPGLTDLKERQLLSEEEYLRAQDQYGQDSFTAMIGAEAIRELLKGLELEKIDAQLRAEMAETDSDIKHKKLAKRLKIVEAFRYSGNKPEWMILTVVPVIPPDLRPLVPLDGGRFATSDLNDLYRRVINRNNRLKRLMELRAPDIIIRNEKRMLQEAVDALFDNGRRGRVITGANKRPLKSLADMLKGKQGRFRQNLLGKRVDYSGRSVIVVGPELKLHQCGLPKKMALELFKPFIYSRLDAKGLSTTVKQAKKLVEKERPEVWDILDEVIREHPVLLNRAPTLHRLGIQAFEPVLIEGKAIQLHPLVCSAFNADFDGDQMAVHVPLSLEAQLEARVLMMSTNNILHPANGQPIIVPSQDIVLGLYYLSIMREGLPGEGKVFADLAELEHALYSKVIHLHTKIKYRWHWVNEEGENTVRLLETTAGRILLGQVLPKSPKLPFDVINKLMTKREISGVIDQVYRHCGQKETVIFCDRIMALGFFNAFKAGISFGKDDMVVPGSKWKIVDSTRTLAKDFEQQYNDGLITHGEKYNKVVDAWSKATEEIAKEMMKEISAVRKAPDGSEQQVNSIYMMAHSGARGSPAQMRQLAGMRGLMAKPSGEIIETPIISNFKEGLSVLEYFNSTHGARKGLADTALKTANSGYLTRRLVDVAQDCIITQADCGTSLGIKMRAIVDAGTVVASLGSRILGRTAGEDVRDPATNEIIVKRGDLMEERDVEAIHQAGVQEVKIRSALTCELVNGICGKCYGRDLARGTPVNHGEAVGVIAAQSIGEPGTQLTMRTFHIGGAAQINEQSVIESNFDGKIVIKNRAIARNGEGHNVAMVRNMVIAIVDPDGTERATHRIQYGARVHVDEGDMVKRGQRIAEWDPYTRPILTEVEGEIGFEDLIEDQSISETLDESTGIAKRIVIDWRSTRGGADLRPAIVIKGKDGKVLKLARGGDARYMLSVDAILSVDVGAQVKPGDILARISTESAKTRDITGGLPRVAELFEARRPKDAAIIAEIAGTIRFGRDYKNKRRLSIEPLDKNEEAREYLIPKGKHIHLQDGDVVEKGDFIVEGNPAPHDILAIKGIEELAAYLVNEIQEVYRLQGVLINDKHIEVIVRQMLQKIEITDQGDTDMISGEQVDKIEFNALNAKAVEEGKKPATGNPVLLGITKASLQTRSFFSAASFQETTRVLTEAAVNGKVDPLEGLKENVIVGRLIPAGTGASMAKIREVAVKRDRLILDEREKQAAIVPAAAPEAEPLSLPPAE.

Positions 73, 75, 88, and 91 each coordinate Zn(2+). 3 residues coordinate Mg(2+): D464, D466, and D468. 4 residues coordinate Zn(2+): C812, C886, C893, and C896.

The protein belongs to the RNA polymerase beta' chain family. In terms of assembly, the RNAP catalytic core consists of 2 alpha, 1 beta, 1 beta' and 1 omega subunit. When a sigma factor is associated with the core the holoenzyme is formed, which can initiate transcription. Mg(2+) is required as a cofactor. It depends on Zn(2+) as a cofactor.

The enzyme catalyses RNA(n) + a ribonucleoside 5'-triphosphate = RNA(n+1) + diphosphate. DNA-dependent RNA polymerase catalyzes the transcription of DNA into RNA using the four ribonucleoside triphosphates as substrates. This chain is DNA-directed RNA polymerase subunit beta', found in Rhodopseudomonas palustris (strain ATCC BAA-98 / CGA009).